A 242-amino-acid polypeptide reads, in one-letter code: Transcriptional regulatory protein btr (242 aa).

In terms of domain architecture, HTH crp-type spans 158–231; sequence MRSEQRLAAF…QREVRLIDLP (74 aa). The H-T-H motif DNA-binding region spans 191 to 210; sequence REEIGNYLGLTLETVSRLFS.

May regulate gene expression in response to changes in oxygen levels or to changes in the redox potential of the bacterial environment. In Bordetella pertussis (strain Tohama I / ATCC BAA-589 / NCTC 13251), this protein is Transcriptional regulatory protein btr (btr).